A 66-amino-acid chain; its full sequence is Large ribosomal subunit protein bL31 (66 aa).

Zn(2+) is bound by residues C16, C18, C36, and C39.

It belongs to the bacterial ribosomal protein bL31 family. Type A subfamily. Part of the 50S ribosomal subunit. It depends on Zn(2+) as a cofactor.

Binds the 23S rRNA. The chain is Large ribosomal subunit protein bL31 from Priestia megaterium (Bacillus megaterium).